A 100-amino-acid polypeptide reads, in one-letter code: NADH-quinone oxidoreductase subunit K (100 aa).

A run of 3 helical transmembrane segments spans residues 4 to 24 (LSHG…SLVM), 28 to 48 (ILFM…ALVV), and 60 to 80 (IMYI…LALL).

Belongs to the complex I subunit 4L family. In terms of assembly, NDH-1 is composed of 13 different subunits. Subunits NuoA, H, J, K, L, M, N constitute the membrane sector of the complex.

It localises to the cell membrane. It carries out the reaction a quinone + NADH + 5 H(+)(in) = a quinol + NAD(+) + 4 H(+)(out). NDH-1 shuttles electrons from NADH, via FMN and iron-sulfur (Fe-S) centers, to quinones in the respiratory chain. The immediate electron acceptor for the enzyme in this species is believed to be ubiquinone. Couples the redox reaction to proton translocation (for every two electrons transferred, four hydrogen ions are translocated across the cytoplasmic membrane), and thus conserves the redox energy in a proton gradient. This chain is NADH-quinone oxidoreductase subunit K, found in Buchnera aphidicola subsp. Baizongia pistaciae (strain Bp).